Reading from the N-terminus, the 120-residue chain is Prefoldin subunit beta (120 aa).

This sequence belongs to the prefoldin subunit beta family. Heterohexamer of two alpha and four beta subunits.

The protein resides in the cytoplasm. Its function is as follows. Molecular chaperone capable of stabilizing a range of proteins. Seems to fulfill an ATP-independent, HSP70-like function in archaeal de novo protein folding. The chain is Prefoldin subunit beta from Methanothrix thermoacetophila (strain DSM 6194 / JCM 14653 / NBRC 101360 / PT) (Methanosaeta thermophila).